We begin with the raw amino-acid sequence, 153 residues long: Aspartate carbamoyltransferase regulatory chain (153 aa).

Zn(2+) contacts are provided by cysteine 109, cysteine 114, cysteine 138, and cysteine 141.

The protein belongs to the PyrI family. As to quaternary structure, contains catalytic and regulatory chains. The cofactor is Zn(2+).

Involved in allosteric regulation of aspartate carbamoyltransferase. The chain is Aspartate carbamoyltransferase regulatory chain from Salmonella paratyphi A (strain ATCC 9150 / SARB42).